An 80-amino-acid polypeptide reads, in one-letter code: Anaphase-promoting complex subunit hcn1 (80 aa).

An N-acetylmethionine modification is found at Met-1. The interval 26 to 54 (QTLDSESTTEEALQKNEESTRLSPEKKKI) is disordered. Residues 37 to 54 (ALQKNEESTRLSPEKKKI) are compositionally biased toward basic and acidic residues.

In terms of assembly, the APC/C is composed of at least 13 subunits: apc1, apc2, nuc2, apc4, apc5, cut9, apc8, apc10, apc11, hcn1, apc13, apc14 and apc15. Interacts directly (via N-terminus) with cut9.

In terms of biological role, component of the anaphase promoting complex/cyclosome (APC/C), a cell cycle-regulated E3 ubiquitin-protein ligase complex that controls progression through mitosis and the G1 phase of the cell cycle. The APC/C is thought to confer substrate specificity and, in the presence of ubiquitin-conjugating E2 enzymes, it catalyzes the formation of protein-ubiquitin conjugates that are subsequently degraded by the 26S proteasome. Has a role in assembling cut9 in the 20S APC/cyclosome. The polypeptide is Anaphase-promoting complex subunit hcn1 (hcn1) (Schizosaccharomyces pombe (strain 972 / ATCC 24843) (Fission yeast)).